The chain runs to 227 residues: Phosphoglycolate phosphatase (227 aa).

The active-site Nucleophile is Asp-8. 2 residues coordinate Mg(2+): Asp-8 and Asp-10. Lys-150 is a binding site for substrate. Residues Asp-173 and Asp-177 each coordinate Mg(2+).

Belongs to the archaeal SPP-like hydrolase family. It depends on Mg(2+) as a cofactor.

The catalysed reaction is 2-phosphoglycolate + H2O = glycolate + phosphate. Its function is as follows. Catalyzes the dephosphorylation of 2-phosphoglycolate. The sequence is that of Phosphoglycolate phosphatase from Sulfolobus acidocaldarius (strain ATCC 33909 / DSM 639 / JCM 8929 / NBRC 15157 / NCIMB 11770).